A 390-amino-acid chain; its full sequence is 1-deoxy-D-xylulose 5-phosphate reductoisomerase (390 aa).

NADPH-binding residues include Thr-10, Gly-11, Ser-12, Val-13, and Asn-124. 1-deoxy-D-xylulose 5-phosphate is bound at residue Lys-125. Residue Glu-126 coordinates NADPH. Asp-150 contributes to the Mn(2+) binding site. The 1-deoxy-D-xylulose 5-phosphate site is built by Ser-151, Glu-152, Ser-181, and His-204. Glu-152 contacts Mn(2+). Gly-210 serves as a coordination point for NADPH. The 1-deoxy-D-xylulose 5-phosphate site is built by Ser-217, Asn-222, Lys-223, and Glu-226. Position 226 (Glu-226) interacts with Mn(2+).

Belongs to the DXR family. Requires Mg(2+) as cofactor. The cofactor is Mn(2+).

It carries out the reaction 2-C-methyl-D-erythritol 4-phosphate + NADP(+) = 1-deoxy-D-xylulose 5-phosphate + NADPH + H(+). Its pathway is isoprenoid biosynthesis; isopentenyl diphosphate biosynthesis via DXP pathway; isopentenyl diphosphate from 1-deoxy-D-xylulose 5-phosphate: step 1/6. Catalyzes the NADPH-dependent rearrangement and reduction of 1-deoxy-D-xylulose-5-phosphate (DXP) to 2-C-methyl-D-erythritol 4-phosphate (MEP). In Janthinobacterium sp. (strain Marseille) (Minibacterium massiliensis), this protein is 1-deoxy-D-xylulose 5-phosphate reductoisomerase.